Here is a 187-residue protein sequence, read N- to C-terminus: Elongation factor P (187 aa).

The protein belongs to the elongation factor P family.

It localises to the cytoplasm. It functions in the pathway protein biosynthesis; polypeptide chain elongation. Involved in peptide bond synthesis. Stimulates efficient translation and peptide-bond synthesis on native or reconstituted 70S ribosomes in vitro. Probably functions indirectly by altering the affinity of the ribosome for aminoacyl-tRNA, thus increasing their reactivity as acceptors for peptidyl transferase. The protein is Elongation factor P of Frankia casuarinae (strain DSM 45818 / CECT 9043 / HFP020203 / CcI3).